We begin with the raw amino-acid sequence, 152 residues long: Endoribonuclease YbeY (152 aa).

Zn(2+) contacts are provided by histidine 117, histidine 121, and histidine 127.

This sequence belongs to the endoribonuclease YbeY family. Zn(2+) is required as a cofactor.

It is found in the cytoplasm. In terms of biological role, single strand-specific metallo-endoribonuclease involved in late-stage 70S ribosome quality control and in maturation of the 3' terminus of the 16S rRNA. The sequence is that of Endoribonuclease YbeY from Borreliella afzelii (strain PKo) (Borrelia afzelii).